Consider the following 278-residue polypeptide: Putative pyruvate, phosphate dikinase regulatory protein (278 aa).

149–156 (GVSRSSKT) contributes to the ADP binding site.

It belongs to the pyruvate, phosphate/water dikinase regulatory protein family. PDRP subfamily.

The catalysed reaction is N(tele)-phospho-L-histidyl/L-threonyl-[pyruvate, phosphate dikinase] + ADP = N(tele)-phospho-L-histidyl/O-phospho-L-threonyl-[pyruvate, phosphate dikinase] + AMP + H(+). It catalyses the reaction N(tele)-phospho-L-histidyl/O-phospho-L-threonyl-[pyruvate, phosphate dikinase] + phosphate + H(+) = N(tele)-phospho-L-histidyl/L-threonyl-[pyruvate, phosphate dikinase] + diphosphate. In terms of biological role, bifunctional serine/threonine kinase and phosphorylase involved in the regulation of the pyruvate, phosphate dikinase (PPDK) by catalyzing its phosphorylation/dephosphorylation. The protein is Putative pyruvate, phosphate dikinase regulatory protein of Erythrobacter litoralis (strain HTCC2594).